A 271-amino-acid chain; its full sequence is Glutamate racemase 3 (271 aa).

Substrate contacts are provided by residues 15-16 and 47-48; these read DS and YG. Cys78 functions as the Proton donor/acceptor in the catalytic mechanism. 79–80 lines the substrate pocket; that stretch reads NT. Cys185 functions as the Proton donor/acceptor in the catalytic mechanism. 186–187 lines the substrate pocket; the sequence is TH.

It belongs to the aspartate/glutamate racemases family.

It catalyses the reaction L-glutamate = D-glutamate. Its pathway is cell wall biogenesis; peptidoglycan biosynthesis. Provides the (R)-glutamate required for cell wall biosynthesis. The sequence is that of Glutamate racemase 3 from Caldanaerobacter subterraneus subsp. tengcongensis (strain DSM 15242 / JCM 11007 / NBRC 100824 / MB4) (Thermoanaerobacter tengcongensis).